The primary structure comprises 140 residues: Methylglyoxal synthase (140 aa).

The region spanning 1-140 (MKIALIAHDR…HEGDRRPLAF (140 aa)) is the MGS-like domain. Substrate-binding positions include His8, Lys12, 34-37 (TGTT), and 54-55 (SG). Asp60 (proton donor/acceptor) is an active-site residue. His87 contacts substrate.

The protein belongs to the methylglyoxal synthase family.

The enzyme catalyses dihydroxyacetone phosphate = methylglyoxal + phosphate. Its function is as follows. Catalyzes the formation of methylglyoxal from dihydroxyacetone phosphate. This is Methylglyoxal synthase from Enterococcus faecalis (strain ATCC 700802 / V583).